The following is a 465-amino-acid chain: Cystathionine beta-lyase (465 aa).

Lys213 carries the N6-(pyridoxal phosphate)lysine modification.

It belongs to the trans-sulfuration enzymes family. The cofactor is pyridoxal 5'-phosphate.

It localises to the cytoplasm. The protein resides in the nucleus. It catalyses the reaction L,L-cystathionine + H2O = L-homocysteine + pyruvate + NH4(+). The catalysed reaction is an S-substituted L-cysteine + H2O = a thiol + pyruvate + NH4(+). It participates in amino-acid biosynthesis; L-methionine biosynthesis via de novo pathway; L-homocysteine from L-cystathionine: step 1/1. This is Cystathionine beta-lyase (STR3) from Saccharomyces cerevisiae (strain ATCC 204508 / S288c) (Baker's yeast).